A 146-amino-acid polypeptide reads, in one-letter code: Prostaglandin E synthase 3 (146 aa).

The region spanning 1–76 is the CS domain; sequence VFIEFCVEDS…ESGQAWPRLT (76 aa). Residues 110-146 are disordered; that stretch reads SEMMNNMGGDDDVDLPEVDGADDDSPDSDDEKMPDLE. Residues 118–139 are compositionally biased toward acidic residues; it reads GDDDVDLPEVDGADDDSPDSDD.

The protein belongs to the p23/wos2 family. As to quaternary structure, binds to telomerase. Binds to the progesterone receptor.

It localises to the cytoplasm. It carries out the reaction prostaglandin H2 = prostaglandin E2. It participates in lipid metabolism; prostaglandin biosynthesis. Functionally, molecular chaperone. The sequence is that of Prostaglandin E synthase 3 (PTGES3) from Gallus gallus (Chicken).